A 312-amino-acid chain; its full sequence is MDIIFYHPTFDTQWWIEALRKAIPQARVRAWKSGDNDSADYALVWHPPVEMLAGRDLKAVFALGAGVDSILSKLQAHPEMLNPSVPLFRLEDTGMGEQMQEYAVSQVLHWFRRFDDYRIQQNSSHWQPLPEYHREDFTIGILGAGVLGSKVAQSLQTWRFPLRCWSRTRKSWPGVQSFAGREELSAFLSQCRVLINLLPNTPETVGIINQQLLEKLPDGAYLLNLARGVHVVEDDLLAALDSGKVKGAMLDVFNREPLPPESPLWQHPRVTITPHVAAITRPAEAVEYISRTIAQLEKGERVCGQVDRARGY.

The active site involves Arg227. Catalysis depends on His275, which acts as the Proton donor.

The protein belongs to the D-isomer specific 2-hydroxyacid dehydrogenase family. GhrA subfamily.

The protein resides in the cytoplasm. It catalyses the reaction glycolate + NADP(+) = glyoxylate + NADPH + H(+). The enzyme catalyses (R)-glycerate + NAD(+) = 3-hydroxypyruvate + NADH + H(+). It carries out the reaction (R)-glycerate + NADP(+) = 3-hydroxypyruvate + NADPH + H(+). Its function is as follows. Catalyzes the NADPH-dependent reduction of glyoxylate and hydroxypyruvate into glycolate and glycerate, respectively. Inactive towards 2-oxo-D-gluconate, 2-oxoglutarate, oxaloacetate and pyruvate. Only D- and L-glycerate are involved in the oxidative activity with NADP. Activity with NAD is very low. The polypeptide is Glyoxylate/hydroxypyruvate reductase A (ghrA) (Escherichia coli (strain K12)).